A 795-amino-acid polypeptide reads, in one-letter code: MSKRHRLDLGEDYPSGKKRAGTDGKDRDRDRDREDRSKDRDRERDRGDREREREKEKEKELRASTNAMLISAGLPPLKASHSAHSTHSAHSAHSTHSAHSTHAGHAGHTSLPQCINPFTNLPHTPRYYDILKKRLQLPVWEYKDRFTDILVRHQSFVLVGETGSGKTTQIPQWCVEYMRSLPGPKRGVACTQPRRVAAMSVAQRVADEMDVMLGQEVGYSIRFEDCSSAKTILKYMTDGMLLREAMNDPLLERYGVIILDEAHERTLATDILMGVLKEVVRQRSDLKVIVMSATLDAGKFQIYFDNCPLLTIPGRTHPVEIFYTPEPERDYLEAAIRTVIQIHMCEEEEGDLLLFLTGQEEIDEACKRIKREVDDLGPEVGDIKIIPLYSTLPPQQQQRIFEPPPPKKQNGAIGRKVVVSTNIAETSLTIDGVVFVIDPGFAKQKVYNPRIRVESLLVTAISKASAQQRAGRAGRTRPGKCFRLYTEKAYKTEMQDNTYPEILRSNLGSVVLQLKKLGIDDLVHFDFMDPPAPETLMRALELLNYLAALNDDGDLTELGSMMAEFPLDPQLAKMVIASCDYNCSNEVLSITAMLSVPQCFVRPTEAKKAADEAKMRFAHIDGDHLTLLNVYHAFKQNHESVQWCYDNFINYRSLMSADNVRQQLSRIMDRFNLPRRSTDFTSRDYYINIRKALVTGYFMQVAHLERTGHYLTVKDNQVVQLHPSTVLDHKPEWVLYNEFVLTTKNYIRTCTDIKPEWLVKIAPQYYDMSNFPQCEAKRQLDRIIAKLQSKEYSQY.

A disordered region spans residues 1-108; the sequence is MSKRHRLDLG…HSTHAGHAGH (108 aa). Phosphoserine is present on Ser15. Basic and acidic residues predominate over residues 20–62; the sequence is AGTDGKDRDRDRDREDRSKDRDRERDRGDREREREKEKEKELR. Residues 79–108 show a composition bias toward low complexity; that stretch reads ASHSAHSTHSAHSAHSTHSAHSTHAGHAGH. The 167-residue stretch at 147–313 folds into the Helicase ATP-binding domain; the sequence is TDILVRHQSF…FDNCPLLTIP (167 aa). 160-167 is an ATP binding site; that stretch reads GETGSGKT. The DEAH box motif lies at 260-263; that stretch reads DEAH. Residues 338–518 enclose the Helicase C-terminal domain; it reads TVIQIHMCEE…SVVLQLKKLG (181 aa). Position 488 is an N6-acetyllysine (Lys488). A Glycyl lysine isopeptide (Lys-Gly) (interchain with G-Cter in SUMO2) cross-link involves residue Lys786.

This sequence belongs to the DEAD box helicase family. DEAH subfamily. DDX15/PRP43 sub-subfamily. As to quaternary structure, component of the U11/U12 snRNPs that are part of the U12-type spliceosome. Identified in the Intron Large spliceosome complex (IL, also named intron lariat spliceosome), a post-mRNA release spliceosomal complex containing the excised intron, U2, U5 and U6 snRNPs, and splicing factors; the association may be transient. The IL complex exists in two distinct conformations, one with the DHX15 (ILS2) and one without (ILS1). Interacts with TFIP11 (via G-patch domain); indicative for a recruitment to the IL complex. Interacts with SSB/La. Interacts with GPATCH2 (via G-patch domain); promoting the RNA helicase activity. Interacts with NKRF (via G-patch domain); promoting the RNA helicase activity. Interacts with NLRP6.

It is found in the nucleus. Its subcellular location is the nucleolus. The enzyme catalyses ATP + H2O = ADP + phosphate + H(+). Its activity is regulated as follows. ATPase activity is enhanced upon binding to G-patch domain-containing proteins. G-patch domain-containing proteins act like a brace that tethers mobile sections of DHX15 together, stabilizing a functional conformation with high RNA affinity, thereby promoting the ATPase activity. RNA helicase involved in mRNA processing and antiviral innate immunity. Pre-mRNA processing factor involved in disassembly of spliceosomes after the release of mature mRNA. In cooperation with TFIP11 seem to be involved in the transition of the U2, U5 and U6 snRNP-containing IL complex to the snRNP-free IS complex leading to efficient debranching and turnover of excised introns. Plays a key role in antiviral innate immunity by promoting both MAVS-dependent signaling and NLRP6 inflammasome. Acts as an RNA virus sensor: recognizes and binds viral double stranded RNA (dsRNA) and activates the MAVS-dependent signaling to produce interferon-beta and interferon lambda-3 (IFNL3). Involved in intestinal antiviral innate immunity together with NLRP6: recognizes and binds viral dsRNA and promotes activation of the NLRP6 inflammasome in intestinal epithelial cells to restrict infection by enteric viruses. The NLRP6 inflammasome acts by promoting maturation and secretion of IL18 in the extracellular milieu. Also involved in antibacterial innate immunity by promoting Wnt-induced antimicrobial protein expression in Paneth cells. This Pongo abelii (Sumatran orangutan) protein is ATP-dependent RNA helicase DHX15.